Consider the following 186-residue polypeptide: MAEAASISQGIAERYATALFELSKETGALKTLETDIDALKDVLAGSPDLGAMIASPVISRGDQAKAVAAIAGKMGLSPLMTNTLALMSEKRRLFALPQVLSALAGLIAEEKGEVTAEVTAATKLSAAQAKKLAETLKAKVGKTVKLNTTVDESLIGGLIVKLGSTMIDTSVKSKLASLQNAMKEVG.

This sequence belongs to the ATPase delta chain family. In terms of assembly, F-type ATPases have 2 components, F(1) - the catalytic core - and F(0) - the membrane proton channel. F(1) has five subunits: alpha(3), beta(3), gamma(1), delta(1), epsilon(1). F(0) has three main subunits: a(1), b(2) and c(10-14). The alpha and beta chains form an alternating ring which encloses part of the gamma chain. F(1) is attached to F(0) by a central stalk formed by the gamma and epsilon chains, while a peripheral stalk is formed by the delta and b chains.

Its subcellular location is the cell inner membrane. Functionally, f(1)F(0) ATP synthase produces ATP from ADP in the presence of a proton or sodium gradient. F-type ATPases consist of two structural domains, F(1) containing the extramembraneous catalytic core and F(0) containing the membrane proton channel, linked together by a central stalk and a peripheral stalk. During catalysis, ATP synthesis in the catalytic domain of F(1) is coupled via a rotary mechanism of the central stalk subunits to proton translocation. Its function is as follows. This protein is part of the stalk that links CF(0) to CF(1). It either transmits conformational changes from CF(0) to CF(1) or is implicated in proton conduction. The sequence is that of ATP synthase subunit delta from Fuscovulum blasticum (Rhodobacter blasticus).